The chain runs to 476 residues: Tryptophan--tRNA ligase, cytoplasmic (476 aa).

The tract at residues 1-117 (MADMSNGEQG…LIVRFGSSKI (117 aa)) is dispensable to the catalytic activity. The WHEP-TRS domain occupies 13-69 (SPLELFHSIAAQGELVRDLKARNAAKDEIDSAVKMLLSLKTSYKAATGEDYKVDCPP). A disordered region spans residues 63–83 (YKVDCPPGDPAPESGEGLDAT). The residue at position 159 (Lys159) is an N6-succinyllysine. Positions 169-178 (PSSEAMHVGH) match the 'HIGH' region motif. The short motif at 354–358 (KMSAS) is the 'KMSKS' region element. Ser356 is subject to Phosphoserine.

This sequence belongs to the class-I aminoacyl-tRNA synthetase family. As to quaternary structure, homodimer. Interacts with oxidized form of GAPDH. In terms of processing, proteolytic cleavage generates 2 forms; T1-TrpRS and T2-TrpRS.

It localises to the cytoplasm. The catalysed reaction is tRNA(Trp) + L-tryptophan + ATP = L-tryptophyl-tRNA(Trp) + AMP + diphosphate + H(+). Functionally, T1-TrpRS has aminoacylation activity while T2-TrpRS lacks it. T1-TrpRS and T2-TrpRS possess angiostatic activity. T2-TrpRS inhibits fluid shear stress-activated responses of endothelial cells. Regulates ERK, Akt, and eNOS activation pathways that are associated with angiogenesis, cytoskeletal reorganization and shear stress-responsive gene expression. The polypeptide is Tryptophan--tRNA ligase, cytoplasmic (WARS1) (Bos taurus (Bovine)).